The sequence spans 446 residues: CBL-interacting protein kinase 8 (446 aa).

Residues 13–266 (YEVGRTIGEG…IEEIRNDEWF (254 aa)) enclose the Protein kinase domain. Residues 19–27 (IGEGTFAKV) and Lys42 each bind ATP. Asp136 acts as the Proton acceptor in catalysis. The tract at residues 154–181 (DFGLSAWPAQGGALLRTTCGTPNYVAPE) is activation loop. One can recognise an NAF domain in the interval 301–329 (LDDEAGPLTLNAFDLIILSQGLNLAALFD). Residues 336–365 (KLQNRFLSRKPAKVIMSSMEVVAQSMGYKT) form a PPI region.

This sequence belongs to the protein kinase superfamily. CAMK Ser/Thr protein kinase family. SNF1 subfamily. It depends on Mn(2+) as a cofactor.

It catalyses the reaction L-seryl-[protein] + ATP = O-phospho-L-seryl-[protein] + ADP + H(+). It carries out the reaction L-threonyl-[protein] + ATP = O-phospho-L-threonyl-[protein] + ADP + H(+). Its function is as follows. CIPK serine-threonine protein kinases interact with CBL proteins. Binding of a CBL protein to the regulatory NAF domain of CIPK protein lead to the activation of the kinase in a calcium-dependent manner. The chain is CBL-interacting protein kinase 8 (CIPK8) from Oryza sativa subsp. japonica (Rice).